The following is a 181-amino-acid chain: MRILGIDPGLRTTGFGVIEKHGNKLAYVASGTIKSDGNSTLPERLKTLYDGISEVSRTYAPDCAAIEKVFVNVNPQSTLLLGQARGAAICGLVGYGLPVFEYTALQLKVAVVGYGRANKAQVQEMVTRLLMLPGQPGSDAADALGVAICHANGSDTLGTLSGLAPDLVRKGMRVRRGRLVG.

Active-site residues include Asp-7, Glu-67, and Asp-139. Mg(2+) is bound by residues Asp-7, Glu-67, and Asp-139.

The protein belongs to the RuvC family. In terms of assembly, homodimer which binds Holliday junction (HJ) DNA. The HJ becomes 2-fold symmetrical on binding to RuvC with unstacked arms; it has a different conformation from HJ DNA in complex with RuvA. In the full resolvosome a probable DNA-RuvA(4)-RuvB(12)-RuvC(2) complex forms which resolves the HJ. Mg(2+) serves as cofactor.

It localises to the cytoplasm. It catalyses the reaction Endonucleolytic cleavage at a junction such as a reciprocal single-stranded crossover between two homologous DNA duplexes (Holliday junction).. In terms of biological role, the RuvA-RuvB-RuvC complex processes Holliday junction (HJ) DNA during genetic recombination and DNA repair. Endonuclease that resolves HJ intermediates. Cleaves cruciform DNA by making single-stranded nicks across the HJ at symmetrical positions within the homologous arms, yielding a 5'-phosphate and a 3'-hydroxyl group; requires a central core of homology in the junction. The consensus cleavage sequence is 5'-(A/T)TT(C/G)-3'. Cleavage occurs on the 3'-side of the TT dinucleotide at the point of strand exchange. HJ branch migration catalyzed by RuvA-RuvB allows RuvC to scan DNA until it finds its consensus sequence, where it cleaves and resolves the cruciform DNA. The polypeptide is Crossover junction endodeoxyribonuclease RuvC (Cupriavidus necator (strain ATCC 17699 / DSM 428 / KCTC 22496 / NCIMB 10442 / H16 / Stanier 337) (Ralstonia eutropha)).